Consider the following 144-residue polypeptide: Peptide methionine sulfoxide reductase MsrB (144 aa).

One can recognise a MsrB domain in the interval 6–128 (KDELKKKLTP…NSAALRFIPK (123 aa)). Cys-117 acts as the Nucleophile in catalysis.

Belongs to the MsrB Met sulfoxide reductase family.

The enzyme catalyses L-methionyl-[protein] + [thioredoxin]-disulfide + H2O = L-methionyl-(R)-S-oxide-[protein] + [thioredoxin]-dithiol. This is Peptide methionine sulfoxide reductase MsrB from Shouchella clausii (strain KSM-K16) (Alkalihalobacillus clausii).